The primary structure comprises 100 residues: Vesicle-associated membrane protein 8 (100 aa).

Met1 is subject to N-acetylmethionine. Topologically, residues 1–75 are cytoplasmic; that stretch reads MEEASEGGGN…ARKFWWKNVK (75 aa). A phosphoserine mark is found at Ser5 and Ser18. The region spanning 12–72 is the v-SNARE coiled-coil homology domain; it reads RVRNLQSEVE…QKVARKFWWK (61 aa). A phosphothreonine mark is found at Thr28, Thr48, and Thr54. Ser55 is modified (phosphoserine). (Microbial infection) N6-stearoyl lysine attachment occurs at residues Lys64 and Lys68. The helical; Anchor for type IV membrane protein transmembrane segment at 76 to 96 threads the bilayer; that stretch reads MIVLICVIVFIIILFIVLFAT. The Vesicular portion of the chain corresponds to 97–100; it reads GAFS.

The protein belongs to the synaptobrevin family. As to quaternary structure, forms a SNARE complex composed of VAMP8, SNAP29 and STX17 involved in fusion of autophagosome with lysosome. Found in a number of SNARE complexes with NAPA, SNAP23, SNAP25, STX1A, STX4, STX7, STX8 and VTI1B. Interacts with PICALM. SNARE complex formation and binding by PICALM are mutually exclusive processes for VAMP8. Interacts with SBF2/MTMR13. Interacts with RAB21 (in GTP-bound form) in response to starvation; the interaction probably regulates VAMP8 endolysosomal trafficking. Interacts with STX17; this interaction is increased in the absence of TMEM39A. Interacts with TRIM6. (Microbial infection) The interaction with STX17 is decreased in presence of SARS coronavirus-2/SARS-CoV-2 ORF3A protein. Post-translationally, (Microbial infection) Stearoylated By S.flexneri N-epsilon-fatty acyltransferase IcsB, thereby disrupting the host actin cytoskeleton. As to expression, platelets.

It is found in the lysosome membrane. It localises to the early endosome membrane. The protein localises to the late endosome membrane. The protein resides in the cell membrane. Its subcellular location is the zymogen granule membrane. Its function is as follows. SNAREs, soluble N-ethylmaleimide-sensitive factor-attachment protein receptors, are essential proteins for fusion of cellular membranes. SNAREs localized on opposing membranes assemble to form a trans-SNARE complex, an extended, parallel four alpha-helical bundle that drives membrane fusion. VAMP8 is a SNARE involved in autophagy through the direct control of autophagosome membrane fusion with the lysososome membrane via its interaction with the STX17-SNAP29 binary t-SNARE complex. Also required for dense-granule secretion in platelets. Also plays a role in regulated enzyme secretion in pancreatic acinar cells. Involved in the abscission of the midbody during cell division, which leads to completely separate daughter cells. Involved in the homotypic fusion of early and late endosomes. Also participates in the activation of type I interferon antiviral response through a TRIM6-dependent mechanism. In Homo sapiens (Human), this protein is Vesicle-associated membrane protein 8.